Consider the following 261-residue polypeptide: UPF0246 protein Daci_5283 (261 aa).

This sequence belongs to the UPF0246 family.

The chain is UPF0246 protein Daci_5283 from Delftia acidovorans (strain DSM 14801 / SPH-1).